The following is a 207-amino-acid chain: Octanoyltransferase (207 aa).

The BPL/LPL catalytic domain occupies 27–203 (ADTEDELWVV…HLETQFTPKA (177 aa)). Residues 66–73 (RGGQITYH), 133–135 (SLG), and 146–148 (GLA) contribute to the substrate site. C164 serves as the catalytic Acyl-thioester intermediate.

This sequence belongs to the LipB family.

Its subcellular location is the cytoplasm. It catalyses the reaction octanoyl-[ACP] + L-lysyl-[protein] = N(6)-octanoyl-L-lysyl-[protein] + holo-[ACP] + H(+). It functions in the pathway protein modification; protein lipoylation via endogenous pathway; protein N(6)-(lipoyl)lysine from octanoyl-[acyl-carrier-protein]: step 1/2. In terms of biological role, catalyzes the transfer of endogenously produced octanoic acid from octanoyl-acyl-carrier-protein onto the lipoyl domains of lipoate-dependent enzymes. Lipoyl-ACP can also act as a substrate although octanoyl-ACP is likely to be the physiological substrate. This Neisseria meningitidis serogroup A / serotype 4A (strain DSM 15465 / Z2491) protein is Octanoyltransferase.